The chain runs to 274 residues: uncharacterized protein (274 aa).

The signal sequence occupies residues methionine 1–alanine 19.

This is an uncharacterized protein from Rickettsia prowazekii (strain Madrid E).